The chain runs to 176 residues: Cystatin-related protein 2 (176 aa).

Positions 1 to 26 (MYKTLCGTQLLLAIFVLFLNFSHATA) are cleaved as a signal peptide. Positions 27 to 30 (KGTR) are excised as a propeptide. A glycan (N-linked (GlcNAc...) asparagine) is linked at Asn-71. Cystine bridges form between Cys-129–Cys-139 and Cys-153–Cys-173.

Belongs to the cystatin family. In terms of tissue distribution, prostate.

This is Cystatin-related protein 2 (Crp2) from Rattus norvegicus (Rat).